Reading from the N-terminus, the 370-residue chain is MILKRISILNYKNLEQVELNFSAKLNCFFGQNGMGKTNLLDAVYFLSFCKSAGNPIDSQNIRHEQDFFVIQGFYEAMDGTPEEIYCGMKRRSKKQFKRNKKEYSRLSDHIGFIPLVMVSPADSELIAGGSDERRRFMDVVISQYDKEYLDALIRYNKALVQRNTLLKSEQPIEEELFLVWEEMMAQAGEVVFRKREAFISEFIPIFQSFYSYISQDKEQVGLTYESHARKASLLEVLKESRVRDKIMGYSLRGIHKDELNMLLGDFPIKREGSQGQNKTYLVALKLAQFDFLKRTGSTVPLLLLDDIFDKLDASRVEQIVKLVAGDNFGQIFITDTNREHLDRILYKVGSDYKMFRVESGAINEMEEKER.

Residue G30–T37 participates in ATP binding.

Belongs to the RecF family.

It is found in the cytoplasm. The RecF protein is involved in DNA metabolism; it is required for DNA replication and normal SOS inducibility. RecF binds preferentially to single-stranded, linear DNA. It also seems to bind ATP. The protein is DNA replication and repair protein RecF of Bacteroides fragilis (strain ATCC 25285 / DSM 2151 / CCUG 4856 / JCM 11019 / LMG 10263 / NCTC 9343 / Onslow / VPI 2553 / EN-2).